A 254-amino-acid polypeptide reads, in one-letter code: Thiazole synthase (254 aa).

The Schiff-base intermediate with DXP role is filled by K95. 1-deoxy-D-xylulose 5-phosphate contacts are provided by residues G156, 182 to 183, and 204 to 205; these read AG and NT.

The protein belongs to the ThiG family. As to quaternary structure, homotetramer. Forms heterodimers with either ThiH or ThiS.

Its subcellular location is the cytoplasm. It catalyses the reaction [ThiS sulfur-carrier protein]-C-terminal-Gly-aminoethanethioate + 2-iminoacetate + 1-deoxy-D-xylulose 5-phosphate = [ThiS sulfur-carrier protein]-C-terminal Gly-Gly + 2-[(2R,5Z)-2-carboxy-4-methylthiazol-5(2H)-ylidene]ethyl phosphate + 2 H2O + H(+). It participates in cofactor biosynthesis; thiamine diphosphate biosynthesis. Its function is as follows. Catalyzes the rearrangement of 1-deoxy-D-xylulose 5-phosphate (DXP) to produce the thiazole phosphate moiety of thiamine. Sulfur is provided by the thiocarboxylate moiety of the carrier protein ThiS. In vitro, sulfur can be provided by H(2)S. The sequence is that of Thiazole synthase from Shewanella sediminis (strain HAW-EB3).